Consider the following 309-residue polypeptide: Pantothenate kinase (309 aa).

92–99 contributes to the ATP binding site; sequence GSVAVGKS.

The protein belongs to the prokaryotic pantothenate kinase family.

It is found in the cytoplasm. It catalyses the reaction (R)-pantothenate + ATP = (R)-4'-phosphopantothenate + ADP + H(+). It participates in cofactor biosynthesis; coenzyme A biosynthesis; CoA from (R)-pantothenate: step 1/5. The polypeptide is Pantothenate kinase (Latilactobacillus sakei subsp. sakei (strain 23K) (Lactobacillus sakei subsp. sakei)).